A 146-amino-acid chain; its full sequence is D-aminoacyl-tRNA deacylase (146 aa).

The Gly-cisPro motif, important for rejection of L-amino acids motif lies at 137 to 138 (GP).

It belongs to the DTD family. Homodimer.

The protein resides in the cytoplasm. The enzyme catalyses glycyl-tRNA(Ala) + H2O = tRNA(Ala) + glycine + H(+). It carries out the reaction a D-aminoacyl-tRNA + H2O = a tRNA + a D-alpha-amino acid + H(+). Its function is as follows. An aminoacyl-tRNA editing enzyme that deacylates mischarged D-aminoacyl-tRNAs. Also deacylates mischarged glycyl-tRNA(Ala), protecting cells against glycine mischarging by AlaRS. Acts via tRNA-based rather than protein-based catalysis; rejects L-amino acids rather than detecting D-amino acids in the active site. By recycling D-aminoacyl-tRNA to D-amino acids and free tRNA molecules, this enzyme counteracts the toxicity associated with the formation of D-aminoacyl-tRNA entities in vivo and helps enforce protein L-homochirality. The polypeptide is D-aminoacyl-tRNA deacylase (Bacillus cereus (strain ATCC 14579 / DSM 31 / CCUG 7414 / JCM 2152 / NBRC 15305 / NCIMB 9373 / NCTC 2599 / NRRL B-3711)).